The sequence spans 469 residues: Probable ribonuclease FAU-1 (469 aa).

This sequence belongs to the FAU-1 family.

In terms of biological role, probable RNase involved in rRNA stability through maturation and/or degradation of precursor rRNAs. Binds to RNA in loop regions with AU-rich sequences. The polypeptide is Probable ribonuclease FAU-1 (Ignicoccus hospitalis (strain KIN4/I / DSM 18386 / JCM 14125)).